A 388-amino-acid chain; its full sequence is Protein DVU_0534 (388 aa).

A run of 10 helical transmembrane segments spans residues L10–L31, L57–G78, A89–Y106, E130–V144, L166–I191, L199–I222, A254–I265, M291–V306, F316–N328, and I354–Y368.

This sequence belongs to the NrfD family.

The protein localises to the cell membrane. In terms of biological role, HMWC (high-molecular-weight cytochrome c), ORF2, ORF3, ORF4, ORF5 and ORF6 in the HMC operon form a transmembrane protein complex that allows electron flow from the periplasmic hydrogenase to the cytoplasmic enzymes that catalyze reduction of sulfates. This chain is Protein DVU_0534, found in Nitratidesulfovibrio vulgaris (strain ATCC 29579 / DSM 644 / CCUG 34227 / NCIMB 8303 / VKM B-1760 / Hildenborough) (Desulfovibrio vulgaris).